A 365-amino-acid polypeptide reads, in one-letter code: Carbamoyl phosphate synthase small chain (365 aa).

CPSase stretches follow at residues 1–166 (MKRQ…PSPG) and 1–169 (MKRQ…GRGH). 3 residues coordinate L-glutamine: serine 45, glycine 218, and glycine 220. The region spanning 170–357 (RVVLVDFGMK…LTMIENFKKE (188 aa)) is the Glutamine amidotransferase type-1 domain. Catalysis depends on cysteine 245, which acts as the Nucleophile. 5 residues coordinate L-glutamine: leucine 246, glutamine 249, asparagine 287, glycine 289, and tyrosine 290. Catalysis depends on residues histidine 330 and glutamate 332.

This sequence belongs to the CarA family. In terms of assembly, composed of two chains; the small (or glutamine) chain promotes the hydrolysis of glutamine to ammonia, which is used by the large (or ammonia) chain to synthesize carbamoyl phosphate. Tetramer of heterodimers (alpha,beta)4.

It carries out the reaction hydrogencarbonate + L-glutamine + 2 ATP + H2O = carbamoyl phosphate + L-glutamate + 2 ADP + phosphate + 2 H(+). It catalyses the reaction L-glutamine + H2O = L-glutamate + NH4(+). It participates in amino-acid biosynthesis; L-arginine biosynthesis; carbamoyl phosphate from bicarbonate: step 1/1. The protein operates within pyrimidine metabolism; UMP biosynthesis via de novo pathway; (S)-dihydroorotate from bicarbonate: step 1/3. Its function is as follows. Small subunit of the glutamine-dependent carbamoyl phosphate synthetase (CPSase). CPSase catalyzes the formation of carbamoyl phosphate from the ammonia moiety of glutamine, carbonate, and phosphate donated by ATP, constituting the first step of 2 biosynthetic pathways, one leading to arginine and/or urea and the other to pyrimidine nucleotides. The small subunit (glutamine amidotransferase) binds and cleaves glutamine to supply the large subunit with the substrate ammonia. The protein is Carbamoyl phosphate synthase small chain of Bacillus cereus (strain ATCC 10987 / NRS 248).